Consider the following 81-residue polypeptide: Alpha-toxin Ac1 (81 aa).

The signal sequence occupies residues 1 to 17 (YIVMISLALVVMIGVES). The LCN-type CS-alpha/beta domain maps to 19 to 80 (RDGYIVYPNN…PIKDPSQKCT (62 aa)). Disulfide bonds link Cys-29/Cys-79, Cys-33/Cys-51, Cys-37/Cys-61, and Cys-41/Cys-63.

Belongs to the long (4 C-C) scorpion toxin superfamily. Sodium channel inhibitor family. Alpha subfamily. In terms of tissue distribution, expressed by the venom gland.

Its subcellular location is the secreted. Its function is as follows. Alpha toxins bind voltage-independently at site-3 of sodium channels (Nav) and inhibit the inactivation of the activated channels, thereby blocking neuronal transmission. The chain is Alpha-toxin Ac1 from Androctonus crassicauda (Arabian fat-tailed scorpion).